A 298-amino-acid polypeptide reads, in one-letter code: MTLSNPAIAAASGVILAGAYLIDPSALPFVAAGVAATWARVLFKKTAVKTPPMDPKEYRKFKLVDKVHCSPNTAMYKFALPHEDDLLNLPIGQHISIMANINGKDISRSYTPTSSSDDVGHFVLCIKSYPQGNISKMFSELSIGDSINARGPKGQFSYTPNMCRAIGMIAGGTGLTPMLQIIRAIVKNPEDKTQVNFIFANVTEEDIILKAELDLLSQKHPQFKVYYVLNNAPEGWTGGVGFVNADMIKEHMPAPAADIKVLLCGPPPMVSAMSKITQDLGYDKVNAVSKLPDQVFKF.

The chain crosses the membrane as a helical span at residues V14–V34. The region spanning K56–T159 is the FAD-binding FR-type domain. Residues S139 to G154 and A165 to F197 each bind FAD.

Belongs to the flavoprotein pyridine nucleotide cytochrome reductase family. Monomer. Component of the 2-(3-amino-3-carboxypropyl)histidine synthase complex composed of DPH1, DPH2, DPH3 and a NADH-dependent reductase, predominantly CBR1. FAD serves as cofactor.

It localises to the mitochondrion outer membrane. The enzyme catalyses 2 Fe(III)-[cytochrome b5] + NADH = 2 Fe(II)-[cytochrome b5] + NAD(+) + H(+). It carries out the reaction 2 Fe(3+)-[Dph3] + NADH = 2 Fe(2+)-[Dph3] + NAD(+) + H(+). It participates in protein modification; peptidyl-diphthamide biosynthesis. In terms of biological role, NADH-dependent reductase for DPH3 and cytochrome b5. Required for the first step of diphthamide biosynthesis, a post-translational modification of histidine which occurs in elongation factor 2. DPH1 and DPH2 transfer a 3-amino-3-carboxypropyl (ACP) group from S-adenosyl-L-methionine (SAM) to a histidine residue, the reaction is assisted by a reduction system comprising DPH3 and a NADH-dependent reductase, predominantly CBR1. By reducing DPH3, also involved in the formation of the tRNA wobble base modification mcm5s 2U (5-methoxycarbonylmethyl-2-thiouridine), mediated by the elongator complex. The cytochrome b5/NADH cytochrome b5 reductase electron transfer system supports the catalytic activity of several sterol biosynthetic enzymes. The chain is NADH-cytochrome b5 reductase 1 (CBR1) from Mortierella alpina (Oleaginous fungus).